Here is a 331-residue protein sequence, read N- to C-terminus: Phosphate acyltransferase (331 aa).

Belongs to the PlsX family. Homodimer. Probably interacts with PlsY.

It is found in the cytoplasm. The catalysed reaction is a fatty acyl-[ACP] + phosphate = an acyl phosphate + holo-[ACP]. It participates in lipid metabolism; phospholipid metabolism. Catalyzes the reversible formation of acyl-phosphate (acyl-PO(4)) from acyl-[acyl-carrier-protein] (acyl-ACP). This enzyme utilizes acyl-ACP as fatty acyl donor, but not acyl-CoA. In Clostridium acetobutylicum (strain ATCC 824 / DSM 792 / JCM 1419 / IAM 19013 / LMG 5710 / NBRC 13948 / NRRL B-527 / VKM B-1787 / 2291 / W), this protein is Phosphate acyltransferase.